The following is a 180-amino-acid chain: Chromatin structure-remodeling complex protein RSC14 (180 aa).

As to quaternary structure, interacts with STH1, RSC3 and ARP9. Component of the two forms of the RSC complex composed of at least either RSC1 or RSC2, and ARP7, ARP9, LDB7, NPL6, RSC3, RSC30, RSC4, RSC58, RSC6, RSC8, RSC9, SFH1, STH1, HTL1 and probably RTT102. The complexes interact with histone and histone variant components of centromeric chromatin. Component of a fungal-specific module (HTL1-LDB7-NPL6-RSC3-RSC30) within the RSC complex.

Its subcellular location is the nucleus. In terms of biological role, component of the chromatin structure-remodeling complex (RSC), which is involved in transcription regulation and nucleosome positioning. RSC is responsible for the transfer of a histone octamer from a nucleosome core particle to naked DNA. The reaction requires ATP and involves an activated RSC-nucleosome intermediate. Remodeling reaction also involves DNA translocation, DNA twist and conformational change. As a reconfigurer of centromeric and flanking nucleosomes, RSC complex is required both for proper kinetochore function in chromosome segregation and, via a PKC1-dependent signaling pathway, for organization of the cellular cytoskeleton. Together with HTL1, NPL6, RSC3, RSC30 components, defines a fungal-specific module within the RSC complex that plays a role in many cellular functions including the maintenance of cell wall integrity. May be involved in the transfer of mannosylphosphate (MP) groups into N-linked oligosaccharides. In Saccharomyces cerevisiae (strain ATCC 204508 / S288c) (Baker's yeast), this protein is Chromatin structure-remodeling complex protein RSC14 (LDB7).